Consider the following 319-residue polypeptide: Cobalamin biosynthesis protein CobD (319 aa).

5 helical membrane-spanning segments follow: residues 56–76 (VMWLVVIGLTWGVAWGVLALA), 78–98 (GIHPWLGWLVEVWMIFTALAG), 153–173 (VDGIIAPLFFLLLGGAPLAMA), 204–224 (VANFLPARLSWLLLSLAAVLC), and 296–316 (LMWVASSLALALFIGVRYWLV).

It belongs to the CobD/CbiB family.

Its subcellular location is the cell membrane. The protein operates within cofactor biosynthesis; adenosylcobalamin biosynthesis. In terms of biological role, converts cobyric acid to cobinamide by the addition of aminopropanol on the F carboxylic group. This is Cobalamin biosynthesis protein CobD from Klebsiella pneumoniae subsp. pneumoniae (strain ATCC 700721 / MGH 78578).